The following is a 237-amino-acid chain: Carboxy-S-adenosyl-L-methionine synthase (237 aa).

S-adenosyl-L-methionine is bound by residues Tyr-40, 65–67 (GCS), 116–117 (DI), Asn-131, and Arg-194.

It belongs to the class I-like SAM-binding methyltransferase superfamily. Cx-SAM synthase family. Homodimer.

The catalysed reaction is prephenate + S-adenosyl-L-methionine = carboxy-S-adenosyl-L-methionine + 3-phenylpyruvate + H2O. Functionally, catalyzes the conversion of S-adenosyl-L-methionine (SAM) to carboxy-S-adenosyl-L-methionine (Cx-SAM). In Dichelobacter nodosus (strain VCS1703A), this protein is Carboxy-S-adenosyl-L-methionine synthase.